The primary structure comprises 447 residues: Exodeoxyribonuclease 7 large subunit (447 aa).

The protein belongs to the XseA family. In terms of assembly, heterooligomer composed of large and small subunits.

The protein localises to the cytoplasm. The enzyme catalyses Exonucleolytic cleavage in either 5'- to 3'- or 3'- to 5'-direction to yield nucleoside 5'-phosphates.. Its function is as follows. Bidirectionally degrades single-stranded DNA into large acid-insoluble oligonucleotides, which are then degraded further into small acid-soluble oligonucleotides. The chain is Exodeoxyribonuclease 7 large subunit from Lactiplantibacillus plantarum (strain ATCC BAA-793 / NCIMB 8826 / WCFS1) (Lactobacillus plantarum).